A 301-amino-acid chain; its full sequence is 4-hydroxy-tetrahydrodipicolinate synthase (301 aa).

Position 46 (T46) interacts with pyruvate. Y134 functions as the Proton donor/acceptor in the catalytic mechanism. The active-site Schiff-base intermediate with substrate is K162. Residue I203 coordinates pyruvate.

This sequence belongs to the DapA family. In terms of assembly, homotetramer; dimer of dimers.

Its subcellular location is the cytoplasm. It carries out the reaction L-aspartate 4-semialdehyde + pyruvate = (2S,4S)-4-hydroxy-2,3,4,5-tetrahydrodipicolinate + H2O + H(+). Its pathway is amino-acid biosynthesis; L-lysine biosynthesis via DAP pathway; (S)-tetrahydrodipicolinate from L-aspartate: step 3/4. Functionally, catalyzes the condensation of (S)-aspartate-beta-semialdehyde [(S)-ASA] and pyruvate to 4-hydroxy-tetrahydrodipicolinate (HTPA). The polypeptide is 4-hydroxy-tetrahydrodipicolinate synthase (Anaplasma marginale (strain Florida)).